Consider the following 294-residue polypeptide: 33 kDa chaperonin (294 aa).

2 disulfide bridges follow: C239–C241 and C272–C275.

It belongs to the HSP33 family. Post-translationally, under oxidizing conditions two disulfide bonds are formed involving the reactive cysteines. Under reducing conditions zinc is bound to the reactive cysteines and the protein is inactive.

It is found in the cytoplasm. In terms of biological role, redox regulated molecular chaperone. Protects both thermally unfolding and oxidatively damaged proteins from irreversible aggregation. Plays an important role in the bacterial defense system toward oxidative stress. The protein is 33 kDa chaperonin of Listeria innocua serovar 6a (strain ATCC BAA-680 / CLIP 11262).